Consider the following 219-residue polypeptide: uncharacterized protein (219 aa).

The signal sequence occupies residues 1–22 (MKKRRKICYCNTALLLMILLAG). A lipid anchor (N-palmitoyl cysteine) is attached at Cys-23. Cys-23 is lipidated: S-diacylglycerol cysteine. The interval 26–89 (SKDGEAQQPS…SAEEKSKEDN (64 aa)) is disordered. Over residues 32-42 (QQPSNQASAVQ) the composition is skewed to polar residues. The span at 43–61 (TDEKHTEPEESTKIRKDEA) shows a compositional bias: basic and acidic residues.

It localises to the cell membrane. This is an uncharacterized protein from Bacillus subtilis (strain 168).